We begin with the raw amino-acid sequence, 222 residues long: Octanoyltransferase (222 aa).

The BPL/LPL catalytic domain maps to 32 to 207; the sequence is RDRPDVLMLL…AFARVFGVQC (176 aa). Substrate-binding positions include 72–79, 139–141, and 152–154; these read RGGEVTYH, ALG, and GFA. Residue C170 is the Acyl-thioester intermediate of the active site.

The protein belongs to the LipB family.

It localises to the cytoplasm. It catalyses the reaction octanoyl-[ACP] + L-lysyl-[protein] = N(6)-octanoyl-L-lysyl-[protein] + holo-[ACP] + H(+). It functions in the pathway protein modification; protein lipoylation via endogenous pathway; protein N(6)-(lipoyl)lysine from octanoyl-[acyl-carrier-protein]: step 1/2. In terms of biological role, catalyzes the transfer of endogenously produced octanoic acid from octanoyl-acyl-carrier-protein onto the lipoyl domains of lipoate-dependent enzymes. Lipoyl-ACP can also act as a substrate although octanoyl-ACP is likely to be the physiological substrate. This chain is Octanoyltransferase, found in Gloeobacter violaceus (strain ATCC 29082 / PCC 7421).